Here is a 473-residue protein sequence, read N- to C-terminus: Purple acid phosphatase 1 (473 aa).

Residues 1–38 (MRLVVVGLWCLILGLILNPTKFCDAGVTSSYVRKSLSA) form the signal peptide. The N-linked (GlcNAc...) asparagine glycan is linked to Asn118. Position 172 (Asp172) interacts with Fe cation. The N-linked (GlcNAc...) asparagine glycan is linked to Asn180. Fe cation is bound by residues Asp201 and Tyr204. Residue Asp201 coordinates Mn(2+). Mn(2+) is bound at residue Asn238. Asn238 is a binding site for substrate. Asn311 carries N-linked (GlcNAc...) asparagine glycosylation. Position 323 (His323) interacts with Mn(2+). His333 (proton donor) is an active-site residue. His360 contacts Mn(2+). 360 to 362 (HVH) contributes to the substrate binding site. His362 contacts Fe cation. Asn433 carries N-linked (GlcNAc...) asparagine glycosylation.

Belongs to the metallophosphoesterase superfamily. Purple acid phosphatase family. In terms of assembly, homodimer; disulfide-linked. The cofactor is Fe cation. Requires Mn(2+) as cofactor. Zn(2+) serves as cofactor. It depends on Cu(2+) as a cofactor. Mg(2+) is required as a cofactor.

The protein localises to the secreted. It carries out the reaction a phosphate monoester + H2O = an alcohol + phosphate. The chain is Purple acid phosphatase 1 (PAP1) from Ipomoea batatas (Sweet potato).